The chain runs to 367 residues: Flagellar P-ring protein (367 aa).

The signal sequence occupies residues 1-22 (MRRMLVIRWILAIHLIATQVFA).

This sequence belongs to the FlgI family. As to quaternary structure, the basal body constitutes a major portion of the flagellar organelle and consists of four rings (L,P,S, and M) mounted on a central rod.

The protein localises to the periplasm. The protein resides in the bacterial flagellum basal body. Its function is as follows. Assembles around the rod to form the L-ring and probably protects the motor/basal body from shearing forces during rotation. The protein is Flagellar P-ring protein of Legionella pneumophila (strain Lens).